Here is a 190-residue protein sequence, read N- to C-terminus: Protein GrpE (190 aa).

The segment at 1 to 41 (MAKEKQEEQQKQTAPENEKAPKKDIKKEASDKKGDQTSKLK) is disordered.

The protein belongs to the GrpE family. Homodimer.

The protein resides in the cytoplasm. Participates actively in the response to hyperosmotic and heat shock by preventing the aggregation of stress-denatured proteins, in association with DnaK and GrpE. It is the nucleotide exchange factor for DnaK and may function as a thermosensor. Unfolded proteins bind initially to DnaJ; upon interaction with the DnaJ-bound protein, DnaK hydrolyzes its bound ATP, resulting in the formation of a stable complex. GrpE releases ADP from DnaK; ATP binding to DnaK triggers the release of the substrate protein, thus completing the reaction cycle. Several rounds of ATP-dependent interactions between DnaJ, DnaK and GrpE are required for fully efficient folding. The protein is Protein GrpE of Limosilactobacillus reuteri (strain DSM 20016) (Lactobacillus reuteri).